The chain runs to 616 residues: Chaperone protein HscA (616 aa).

The protein belongs to the heat shock protein 70 family.

Chaperone involved in the maturation of iron-sulfur cluster-containing proteins. Has a low intrinsic ATPase activity which is markedly stimulated by HscB. Involved in the maturation of IscU. This chain is Chaperone protein HscA, found in Salmonella newport (strain SL254).